Consider the following 622-residue polypeptide: Procollagen galactosyltransferase 1 (622 aa).

An N-terminal signal peptide occupies residues 1–29 (MAAAPRAGRRRGQPLLALLLLLLAPLPPG). Asparagine 96, asparagine 184, and asparagine 381 each carry an N-linked (GlcNAc...) asparagine glycan. Over residues 588–606 (RAKSQKMREQQALSREAKN) the composition is skewed to basic and acidic residues. Residues 588-622 (RAKSQKMREQQALSREAKNSDVLQSPLDSAARDEL) form a disordered region. The short motif at 619 to 622 (RDEL) is the Endoplasmic reticulum retention motif element.

The protein belongs to the glycosyltransferase 25 family. N-glycosylated. In terms of tissue distribution, ubiquitous with higher levels in placenta, heart, lung and spleen.

The protein resides in the endoplasmic reticulum lumen. It carries out the reaction (5R)-5-hydroxy-L-lysyl-[collagen] + UDP-alpha-D-galactose = (5R)-5-O-(beta-D-galactosyl)-5-hydroxy-L-lysyl-[collagen] + UDP + H(+). In terms of biological role, beta-galactosyltransferase that transfers beta-galactose to hydroxylysine residues of type I collagen. By acting on collagen glycosylation, facilitates the formation of collagen triple helix. Also involved in the biosynthesis of collagen type IV. In Homo sapiens (Human), this protein is Procollagen galactosyltransferase 1 (COLGALT1).